An 89-amino-acid polypeptide reads, in one-letter code: Large ribosomal subunit protein bL27 (89 aa).

Belongs to the bacterial ribosomal protein bL27 family.

In Ruegeria sp. (strain TM1040) (Silicibacter sp.), this protein is Large ribosomal subunit protein bL27.